A 197-amino-acid chain; its full sequence is Potassium-transporting ATPase KdpC subunit (197 aa).

The chain crosses the membrane as a helical span at residues 7 to 27; the sequence is PAFISLILFTLLFGLIYPLTV.

This sequence belongs to the KdpC family. As to quaternary structure, the system is composed of three essential subunits: KdpA, KdpB and KdpC.

It is found in the cell inner membrane. Functionally, part of the high-affinity ATP-driven potassium transport (or Kdp) system, which catalyzes the hydrolysis of ATP coupled with the electrogenic transport of potassium into the cytoplasm. This subunit acts as a catalytic chaperone that increases the ATP-binding affinity of the ATP-hydrolyzing subunit KdpB by the formation of a transient KdpB/KdpC/ATP ternary complex. In Beijerinckia indica subsp. indica (strain ATCC 9039 / DSM 1715 / NCIMB 8712), this protein is Potassium-transporting ATPase KdpC subunit.